Consider the following 325-residue polypeptide: Tryptophan--tRNA ligase (325 aa).

ATP-binding positions include 9 to 11 (QPS) and 17 to 18 (GN). The 'HIGH' region motif lies at 10–18 (PSGILHIGN). Aspartate 132 contributes to the L-tryptophan binding site. Residues 144–146 (GKD), valine 184, and 191–195 (KMSKS) contribute to the ATP site. The short motif at 191–195 (KMSKS) is the 'KMSKS' region element.

It belongs to the class-I aminoacyl-tRNA synthetase family. In terms of assembly, homodimer.

It localises to the cytoplasm. It catalyses the reaction tRNA(Trp) + L-tryptophan + ATP = L-tryptophyl-tRNA(Trp) + AMP + diphosphate + H(+). Functionally, catalyzes the attachment of tryptophan to tRNA(Trp). This is Tryptophan--tRNA ligase from Fusobacterium nucleatum subsp. nucleatum (strain ATCC 25586 / DSM 15643 / BCRC 10681 / CIP 101130 / JCM 8532 / KCTC 2640 / LMG 13131 / VPI 4355).